The following is a 481-amino-acid chain: Acetyltransferase peniE (481 aa).

Residues histidine 164 and aspartate 411 each act as proton acceptor in the active site.

It belongs to the plant acyltransferase family. In terms of assembly, monomer.

Acetyltransferase; part of the gene cluster that mediates the biosynthesis of penifulvin A, a potent insecticidal sesquiterpene that features a [5.5.5.6]dioxafenestrane ring. The first step of the pathway is performed by the sesquiterpene cyclase peniA that generates the angular triquinane scaffold silphinene via cyclization of the linear farnesyl pyrophosphate (FPP). The cytochrome P450 monooxygenase peniB and the flavin-dependent monooxygenase peniC then catalyze a series of oxidation reactions to transform silphinene into penifulvin A. The dioxygenases peniD and peniF, as well as the acetyltransferase peniE, do not seem to be involved in the biosynthesis of penifulvin A. The chain is Acetyltransferase peniE from Penicillium patulum (Penicillium griseofulvum).